Reading from the N-terminus, the 185-residue chain is Ribosome-recycling factor (185 aa).

It belongs to the RRF family.

Its subcellular location is the cytoplasm. Functionally, responsible for the release of ribosomes from messenger RNA at the termination of protein biosynthesis. May increase the efficiency of translation by recycling ribosomes from one round of translation to another. The polypeptide is Ribosome-recycling factor (Pseudarthrobacter chlorophenolicus (strain ATCC 700700 / DSM 12829 / CIP 107037 / JCM 12360 / KCTC 9906 / NCIMB 13794 / A6) (Arthrobacter chlorophenolicus)).